The chain runs to 492 residues: uncharacterized protein (492 aa).

The chain crosses the membrane as a helical span at residues 30 to 46; the sequence is YVCLSVAVAAVGYANYM. In terms of domain architecture, J spans 144–210; sequence NYYDVLNVNE…IRKNIYDNEG (67 aa).

Its subcellular location is the membrane. This is an uncharacterized protein from Plasmodium falciparum (isolate 3D7).